A 201-amino-acid polypeptide reads, in one-letter code: Guanylate kinase (201 aa).

One can recognise a Guanylate kinase-like domain in the interval 2-180 (SCLFVISAPS…AARDVASIVQ (179 aa)). 9–16 (APSGAGKT) contacts ATP.

The protein belongs to the guanylate kinase family.

It localises to the cytoplasm. It carries out the reaction GMP + ATP = GDP + ADP. Its function is as follows. Essential for recycling GMP and indirectly, cGMP. This chain is Guanylate kinase, found in Nitrosomonas europaea (strain ATCC 19718 / CIP 103999 / KCTC 2705 / NBRC 14298).